Reading from the N-terminus, the 322-residue chain is Epiphycan (322 aa).

An N-terminal signal peptide occupies residues 1-19 (MGMLARVALGLIIIDAVLA). Residues 58–108 (KVSERLSGNRELLTPGPQLGDNQDEDKDEESTPRLIDGSSPQEPEFPGLLG) form a disordered region. An O-linked (Xyl...) (dermatan sulfate) serine glycan is attached at S64. An O-linked (GalNAc...) serine glycan is attached at S96. An LRRNT domain is found at 106–143 (LLGPHTNEDFPTCLLCTCISTTVYCDDHELDAIPPLPK). Cysteines 118 and 130 form a disulfide. LRR repeat units follow at residues 144–165 (KTTYFYSRFNRIKKINKNDFAS), 168–189 (DLKRIDLTSNLISEIDEDAFRK), 192–213 (HLQELVLRDNKIKQLPELPNTL), 238–258 (DLHHLYITDNSLDHIPLPLPE), and 259–280 (SLRALHLQNNDILEMHEDTFCN). A disulfide bridge links C279 with C312. N-linked (GlcNAc...) asparagine glycosylation is found at N283 and N302. The LRR 6 repeat unit spans residues 290 to 310 (ALEDIRLDGNPINLSRTPQAY).

It belongs to the small leucine-rich proteoglycan (SLRP) family. SLRP class III subfamily. In terms of processing, the O-linked polysaccharide on Ser-96 is probably the mucin type linked to GalNAc. There is one glycosaminoglycan chain, known to be dermatan sulfate, and it is probably the O-glycosylation at Ser-64. Confined to the middle zone of embryonic epiphyseal cartilage consisting of flattened chondrocytes and the ossifying region in the limb buds of chick embryos. Has also been detected in testis.

The protein localises to the secreted. The protein resides in the extracellular space. It is found in the extracellular matrix. In terms of biological role, may have a role in bone formation and also in establishing the ordered structure of cartilage through matrix organization. The protein is Epiphycan (Epyc) of Mus musculus (Mouse).